Here is a 1033-residue protein sequence, read N- to C-terminus: Isoleucine--tRNA ligase 2 (1033 aa).

Positions 47-57 match the 'HIGH' region motif; it reads PTANGLPHVGH. Residues 590–594 carry the 'KMSKS' region motif; it reads KMSKS. Lysine 593 is a binding site for ATP.

The protein belongs to the class-I aminoacyl-tRNA synthetase family. IleS type 2 subfamily. In terms of assembly, monomer. Zn(2+) serves as cofactor.

The protein resides in the cytoplasm. It carries out the reaction tRNA(Ile) + L-isoleucine + ATP = L-isoleucyl-tRNA(Ile) + AMP + diphosphate. Catalyzes the attachment of isoleucine to tRNA(Ile). As IleRS can inadvertently accommodate and process structurally similar amino acids such as valine, to avoid such errors it has two additional distinct tRNA(Ile)-dependent editing activities. One activity is designated as 'pretransfer' editing and involves the hydrolysis of activated Val-AMP. The other activity is designated 'posttransfer' editing and involves deacylation of mischarged Val-tRNA(Ile). The sequence is that of Isoleucine--tRNA ligase 2 from Bacillus thuringiensis subsp. konkukian (strain 97-27).